We begin with the raw amino-acid sequence, 418 residues long: Serine/threonine transporter SstT (418 aa).

9 helical membrane passes run 16 to 36 (SLVS…TLIP), 45 to 65 (LGTL…LLLV), 83 to 103 (LLIL…VASF), 142 to 162 (ALLE…GLSL), 192 to 212 (PLGI…SALL), 218 to 238 (LIVL…LIVF), 289 to 309 (VSIP…ITVL), 317 to 337 (LGIS…TISA), and 364 to 384 (VAMQ…SAET).

It belongs to the dicarboxylate/amino acid:cation symporter (DAACS) (TC 2.A.23) family.

It localises to the cell inner membrane. The enzyme catalyses L-serine(in) + Na(+)(in) = L-serine(out) + Na(+)(out). It catalyses the reaction L-threonine(in) + Na(+)(in) = L-threonine(out) + Na(+)(out). Its function is as follows. Involved in the import of serine and threonine into the cell, with the concomitant import of sodium (symport system). The chain is Serine/threonine transporter SstT from Tolumonas auensis (strain DSM 9187 / NBRC 110442 / TA 4).